The chain runs to 136 residues: Histone H3.1 (136 aa).

Residues 1 to 43 (MARTKQTARKSTGGKAPRKQLATKAARKSAPATGGVKKPHRYR) form a disordered region. R3 bears the Asymmetric dimethylarginine; by PRMT6; alternate mark. Citrulline; alternate is present on R3. T4 is modified (phosphothreonine; by HASPIN and VRK1). K5 is modified (allysine; alternate). K5 is modified (N6,N6,N6-trimethyllysine; alternate). Position 5 is an N6,N6-dimethyllysine; alternate (K5). The residue at position 5 (K5) is an N6-(2-hydroxyisobutyryl)lysine; alternate. The residue at position 5 (K5) is an N6-(beta-hydroxybutyryl)lysine; alternate. At K5 the chain carries N6-acetyllysine; alternate. At K5 the chain carries N6-crotonyllysine; alternate. K5 carries the post-translational modification N6-methyllysine; alternate. Q6 bears the 5-glutamyl dopamine; alternate mark. At Q6 the chain carries 5-glutamyl serotonin; alternate. T7 carries the post-translational modification Phosphothreonine; by PKC. At R9 the chain carries Citrulline; alternate. Symmetric dimethylarginine; by PRMT5; alternate is present on R9. An N6,N6,N6-trimethyllysine; alternate modification is found at K10. Residue K10 is modified to N6,N6-dimethyllysine; alternate. K10 carries the post-translational modification N6-(2-hydroxyisobutyryl)lysine; alternate. At K10 the chain carries N6-(beta-hydroxybutyryl)lysine; alternate. At K10 the chain carries N6-acetyllysine; alternate. An N6-crotonyllysine; alternate modification is found at K10. At K10 the chain carries N6-methyllysine; alternate. At K10 the chain carries N6-butyryllysine; alternate. K10 carries the N6-lactoyllysine; alternate modification. S11 is subject to ADP-ribosylserine; alternate. S11 bears the Phosphoserine; alternate; by AURKB, AURKC, RPS6KA3, RPS6KA4 and RPS6KA5 mark. Phosphothreonine; by PKC and CHEK1 is present on T12. K15 bears the N6-(2-hydroxyisobutyryl)lysine; alternate mark. K15 carries the post-translational modification N6-(beta-hydroxybutyryl)lysine; alternate. An N6-acetyllysine; alternate modification is found at K15. The residue at position 15 (K15) is an N6-lactoyllysine; alternate. K15 bears the N6-glutaryllysine; alternate mark. K15 is modified (N6-succinyllysine; alternate). At R18 the chain carries Citrulline; alternate. R18 carries the post-translational modification Asymmetric dimethylarginine; by CARM1; alternate. N6-(2-hydroxyisobutyryl)lysine; alternate occurs at positions 19 and 24. N6-(beta-hydroxybutyryl)lysine; alternate is present on residues K19 and K24. 2 positions are modified to N6-acetyllysine; alternate: K19 and K24. 2 positions are modified to N6-crotonyllysine; alternate: K19 and K24. Residues K19 and K24 each carry the N6-methyllysine; alternate modification. N6-butyryllysine; alternate is present on residues K19 and K24. N6-lactoyllysine; alternate is present on residues K19 and K24. N6-glutaryllysine; alternate occurs at positions 19 and 24. Residue K19 is the site of N6-decanoyllysine attachment. R27 is subject to Citrulline. K28 carries the post-translational modification N6,N6,N6-trimethyllysine; alternate. The residue at position 28 (K28) is an N6,N6-dimethyllysine; alternate. N6-(2-hydroxyisobutyryl)lysine; alternate is present on K28. At K28 the chain carries N6-(beta-hydroxybutyryl)lysine; alternate. K28 carries the N6-acetyllysine; alternate modification. Residue K28 is modified to N6-crotonyllysine; alternate. At K28 the chain carries N6-methyllysine; alternate. K28 bears the N6-lactoyllysine; alternate mark. Residue K28 is modified to N6-glutaryllysine; alternate. S29 is modified (ADP-ribosylserine; alternate). S29 is modified (phosphoserine; alternate; by AURKB, AURKC and RPS6KA5). K37 bears the N6,N6,N6-trimethyllysine; alternate mark. K37 carries the post-translational modification N6,N6-dimethyllysine; alternate. Residue K37 is modified to N6-(2-hydroxyisobutyryl)lysine; alternate. K37 carries the N6-acetyllysine; alternate modification. K37 is modified (N6-methyllysine; alternate). K38 carries the N6-methyllysine modification. At Y42 the chain carries Phosphotyrosine. At K57 the chain carries N6,N6,N6-trimethyllysine; alternate. An N6-(2-hydroxyisobutyryl)lysine; alternate modification is found at K57. K57 carries the post-translational modification N6-(beta-hydroxybutyryl)lysine; alternate. Residue K57 is modified to N6-acetyllysine; alternate. K57 carries the post-translational modification N6-crotonyllysine; alternate. Residue K57 is modified to N6-lactoyllysine; alternate. An N6-glutaryllysine; alternate modification is found at K57. The residue at position 57 (K57) is an N6-succinyllysine; alternate. The residue at position 57 (K57) is an N6-methyllysine; by EHMT2; alternate. At S58 the chain carries Phosphoserine. N6-(2-hydroxyisobutyryl)lysine; alternate is present on residues K65 and K80. 2 positions are modified to N6-methyllysine; alternate: K65 and K80. K80 is subject to N6,N6,N6-trimethyllysine; alternate. Residue K80 is modified to N6,N6-dimethyllysine; alternate. Position 80 is an N6-(beta-hydroxybutyryl)lysine; alternate (K80). K80 bears the N6-acetyllysine; alternate mark. K80 bears the N6-lactoyllysine; alternate mark. Residue K80 is modified to N6-glutaryllysine; alternate. K80 carries the post-translational modification N6-succinyllysine; alternate. T81 carries the post-translational modification Phosphothreonine. S87 is subject to Phosphoserine. T108 is subject to Phosphothreonine. N6-acetyllysine; alternate is present on residues K116 and K123. An N6-glutaryllysine; alternate mark is found at K116 and K123. K123 bears the N6-(2-hydroxyisobutyryl)lysine; alternate mark. An N6-(beta-hydroxybutyryl)lysine; alternate modification is found at K123. K123 bears the N6-methyllysine; alternate mark. An N6-succinyllysine; alternate modification is found at K123.

This sequence belongs to the histone H3 family. In terms of assembly, the nucleosome is a histone octamer containing two molecules each of H2A, H2B, H3 and H4 assembled in one H3-H4 heterotetramer and two H2A-H2B heterodimers. The octamer wraps approximately 147 bp of DNA. Interacts with TONSL; CHAF1A; CHAF1B; MCM2 and DNAJC9. Interacts with NASP; NASP is a histone chaperone that stabilizes and maintains a soluble pool of Histone H3-H4 dimers. Acetylation is generally linked to gene activation. Acetylation on Lys-10 (H3K9ac) impairs methylation at Arg-9 (H3R8me2s). Acetylation on Lys-19 (H3K18ac) and Lys-24 (H3K24ac) favors methylation at Arg-18 (H3R17me). Acetylation at Lys-123 (H3K122ac) by EP300/p300 plays a central role in chromatin structure: localizes at the surface of the histone octamer and stimulates transcription, possibly by promoting nucleosome instability. In terms of processing, citrullination at Arg-9 (H3R8ci) and/or Arg-18 (H3R17ci) by PADI4 impairs methylation and represses transcription. Post-translationally, asymmetric dimethylation at Arg-18 (H3R17me2a) by CARM1 is linked to gene activation. Symmetric dimethylation at Arg-9 (H3R8me2s) by PRMT5 is linked to gene repression. Asymmetric dimethylation at Arg-3 (H3R2me2a) by PRMT6 is linked to gene repression and is mutually exclusive with H3 Lys-5 methylation (H3K4me2 and H3K4me3). H3R2me2a is present at the 3' of genes regardless of their transcription state and is enriched on inactive promoters, while it is absent on active promoters. Methylation at Lys-5 (H3K4me), Lys-37 (H3K36me) and Lys-80 (H3K79me) are linked to gene activation. Methylation at Lys-5 (H3K4me) facilitates subsequent acetylation of H3 and H4. Methylation at Lys-80 (H3K79me) is associated with DNA double-strand break (DSB) responses and is a specific target for TP53BP1. Methylation at Lys-10 (H3K9me) and Lys-28 (H3K27me) are linked to gene repression. Methylation at Lys-10 (H3K9me) is a specific target for HP1 proteins (CBX1, CBX3 and CBX5) and prevents subsequent phosphorylation at Ser-11 (H3S10ph) and acetylation of H3 and H4. Methylation at Lys-5 (H3K4me) and Lys-80 (H3K79me) require preliminary monoubiquitination of H2B at 'Lys-120'. Methylation at Lys-10 (H3K9me) and Lys-28 (H3K27me) are enriched in inactive X chromosome chromatin. Monomethylation at Lys-57 (H3K56me1) by EHMT2/G9A in G1 phase promotes interaction with PCNA and is required for DNA replication. In terms of processing, phosphorylated at Thr-4 (H3T3ph) by VRK1. Phosphorylated at Thr-4 (H3T3ph) by HASPIN during prophase and dephosphorylated during anaphase. Phosphorylation at Ser-11 (H3S10ph) by AURKB is crucial for chromosome condensation and cell-cycle progression during mitosis and meiosis. In addition phosphorylation at Ser-11 (H3S10ph) by RPS6KA4 and RPS6KA5 is important during interphase because it enables the transcription of genes following external stimulation, like mitogens, stress, growth factors or UV irradiation and result in the activation of genes, such as c-fos and c-jun. Phosphorylation at Ser-11 (H3S10ph), which is linked to gene activation, prevents methylation at Lys-10 (H3K9me) but facilitates acetylation of H3 and H4. Phosphorylation at Ser-11 (H3S10ph) by AURKB mediates the dissociation of HP1 proteins (CBX1, CBX3 and CBX5) from heterochromatin. Phosphorylation at Ser-11 (H3S10ph) is also an essential regulatory mechanism for neoplastic cell transformation. Phosphorylated at Ser-29 (H3S28ph) by MAP3K20 isoform 1, RPS6KA5 or AURKB during mitosis or upon ultraviolet B irradiation. Phosphorylation at Thr-7 (H3T6ph) by PRKCB is a specific tag for epigenetic transcriptional activation that prevents demethylation of Lys-5 (H3K4me) by LSD1/KDM1A. At centromeres, specifically phosphorylated at Thr-12 (H3T11ph) from prophase to early anaphase, by DAPK3 and PKN1. Phosphorylation at Thr-12 (H3T11ph) by PKN1 or isoform M2 of PKM (PKM2) is a specific tag for epigenetic transcriptional activation that promotes demethylation of Lys-10 (H3K9me) by KDM4C/JMJD2C. Phosphorylation at Thr-12 (H3T11ph) by chromatin-associated CHEK1 regulates the transcription of cell cycle regulatory genes by modulating acetylation of Lys-10 (H3K9ac). Phosphorylation at Tyr-42 (H3Y41ph) by JAK2 promotes exclusion of CBX5 (HP1 alpha) from chromatin. Post-translationally, monoubiquitinated by RAG1 in lymphoid cells, monoubiquitination is required for V(D)J recombination. Ubiquitinated by the CUL4-DDB-RBX1 complex in response to ultraviolet irradiation. This may weaken the interaction between histones and DNA and facilitate DNA accessibility to repair proteins. Lysine deamination at Lys-5 (H3K4all) to form allysine is mediated by LOXL2. Allysine formation by LOXL2 only takes place on H3K4me3 and results in gene repression. In terms of processing, crotonylation (Kcr) is specifically present in male germ cells and marks testis-specific genes in post-meiotic cells, including X-linked genes that escape sex chromosome inactivation in haploid cells. Crotonylation marks active promoters and enhancers and confers resistance to transcriptional repressors. It is also associated with post-meiotically activated genes on autosomes. Post-translationally, butyrylation of histones marks active promoters and competes with histone acetylation. It is present during late spermatogenesis. Succinylation at Lys-80 (H3K79succ) by KAT2A takes place with a maximum frequency around the transcription start sites of genes. It gives a specific tag for epigenetic transcription activation. Desuccinylation at Lys-123 (H3K122succ) by SIRT7 in response to DNA damage promotes chromatin condensation and double-strand breaks (DSBs) repair. In terms of processing, serine ADP-ribosylation by PARP1 or PARP2 constitutes the primary form of ADP-ribosylation of proteins in response to DNA damage. Serine ADP-ribosylation at Ser-11 (H3S10ADPr) promotes recruitment of CHD1L. H3S10ADPr is mutually exclusive with phosphorylation at Ser-11 (H3S10ph) and impairs acetylation at Lys-10 (H3K9ac). Post-translationally, serotonylated by TGM2 at Gln-6 (H3Q5ser) during serotonergic neuron differentiation. H3Q5ser is associated with trimethylation of Lys-5 (H3K4me3) and enhances general transcription factor IID (TFIID) complex-binding to H3K4me3, thereby facilitating transcription. Dopaminylated by TGM2 at Gln-6 (H3Q5dop) in ventral tegmental area (VTA) neurons. H3Q5dop mediates neurotransmission-independent role of nuclear dopamine by regulating relapse-related transcriptional plasticity in the reward system. In terms of processing, lactylated in macrophages by EP300/P300 by using lactoyl-CoA directly derived from endogenous or exogenous lactate, leading to stimulates gene transcription.

It localises to the nucleus. The protein localises to the chromosome. In terms of biological role, core component of nucleosome. Nucleosomes wrap and compact DNA into chromatin, limiting DNA accessibility to the cellular machineries which require DNA as a template. Histones thereby play a central role in transcription regulation, DNA repair, DNA replication and chromosomal stability. DNA accessibility is regulated via a complex set of post-translational modifications of histones, also called histone code, and nucleosome remodeling. The polypeptide is Histone H3.1 (Homo sapiens (Human)).